A 469-amino-acid chain; its full sequence is Cysteine protease ATG4 (469 aa).

The segment at 48–99 (KNIKADDHHPQTPPSVLKAETETQEAHDTAQPPNPPTNAPDTPPDSISSSFS) is disordered. A compositionally biased stretch (basic and acidic residues) spans 66-75 (AETETQEAHD). The span at 79–90 (PPNPPTNAPDTP) shows a compositional bias: pro residues. Cysteine 172 acts as the Nucleophile in catalysis. Active-site residues include aspartate 362 and histidine 364. The tract at residues 443–469 (GSSEGRESAIDEVETLSDDDTDTIHEA) is disordered. Residues 452-463 (IDEVETLSDDDT) show a composition bias toward acidic residues.

It belongs to the peptidase C54 family. In terms of assembly, interacts with ATG8.

The protein resides in the cytoplasm. The protein localises to the nucleus. It is found in the preautophagosomal structure. The enzyme catalyses [protein]-C-terminal L-amino acid-glycyl-phosphatidylethanolamide + H2O = [protein]-C-terminal L-amino acid-glycine + a 1,2-diacyl-sn-glycero-3-phosphoethanolamine. Functionally, cysteine protease that plays a key role in cytoplasm to vacuole transport (Cvt) and autophagy by mediating both proteolytic activation and delipidation of ATG8. Required for selective autophagic degradation of the nucleus (nucleophagy) as well as for mitophagy which contributes to regulate mitochondrial quantity and quality by eliminating the mitochondria to a basal level to fulfill cellular energy requirements and preventing excess ROS production. The protease activity is required for proteolytic activation of ATG8: cleaves the C-terminal amino acid of ATG8 to reveal a C-terminal glycine. ATG8 ubiquitin-like activity requires the exposure of the glycine at the C-terminus for its conjugation to phosphatidylethanolamine (PE) and its insertion to membranes, which is necessary for autophagy. The ATG8-PE conjugate mediates tethering between adjacent membranes and stimulates membrane hemifusion, leading to expansion of the autophagosomal membrane during autophagy. In addition to the protease activity, also catalyzes deconjugation of PE-conjugated forms of ATG8 during macroautophagy: ATG8 delipidation is required to release the protein from membranes, which facilitates multiple events during macroautophagy, and especially for efficient autophagosome biogenesis, the assembly of ATG9-containing tubulovesicular clusters into phagophores/autophagosomes, and for the disassembly of PAS-associated ATG components. ATG8 delipidation by ATG4 also recycles ATG8-PE generated on inappropriate membranes to maintain a reservoir of unlipidated ATG8 that is required for autophagosome formation at the PAS. Autophagy is required for proper vegetative growth, asexual/sexual reproduction, and full virulence. Autophagy is particularly involved in the biosynthesis of deoxynivalenol (DON), an important virulence determinant. The protein is Cysteine protease ATG4 of Gibberella zeae (strain ATCC MYA-4620 / CBS 123657 / FGSC 9075 / NRRL 31084 / PH-1) (Wheat head blight fungus).